Reading from the N-terminus, the 1105-residue chain is Protein phosphatase 1 regulatory subunit 26 (1105 aa).

4 disordered regions span residues 228 to 382 (LNDK…NKLA), 444 to 468 (QSTY…DSLV), 504 to 526 (TSPE…AKAM), and 589 to 748 (LNRG…DSDD). Positions 275–285 (LLRKHASDSKL) are enriched in basic and acidic residues. Residues 306–317 (TKTSSPSPKSTP) show a composition bias toward low complexity. A compositionally biased stretch (polar residues) spans 359-368 (SPTSANSLTH). Residues 451 to 460 (TEPPPPPPEP) are compositionally biased toward pro residues. Residues 504–516 (TSPELGSQSSKLS) show a composition bias toward polar residues. Low complexity predominate over residues 602 to 612 (SYSSGDKSSSL). Residues 628-647 (SKRKYKKRPKDGKSQCKKRV) are compositionally biased toward basic residues. Over residues 686 to 701 (NSLEKSKKRREEKAVE) the composition is skewed to basic and acidic residues. The segment covering 705 to 715 (PSCSSSPQGNK) has biased composition (polar residues). The segment covering 733 to 742 (RALDDAHESS) has biased composition (basic and acidic residues).

It localises to the nucleus. The protein resides in the nucleolus. In terms of biological role, may inhibit phosphatase activity of protein phosphatase 1 (PP1) complexes. May positively regulate cell proliferation. The sequence is that of Protein phosphatase 1 regulatory subunit 26 (ppp1r26) from Xenopus laevis (African clawed frog).